The primary structure comprises 551 residues: Glucose-6-phosphate isomerase 2 (551 aa).

The active-site Proton donor is the glutamate 359. Residues histidine 390 and lysine 514 contribute to the active site.

It belongs to the GPI family.

It is found in the cytoplasm. It carries out the reaction alpha-D-glucose 6-phosphate = beta-D-fructose 6-phosphate. It participates in carbohydrate biosynthesis; gluconeogenesis. It functions in the pathway carbohydrate degradation; glycolysis; D-glyceraldehyde 3-phosphate and glycerone phosphate from D-glucose: step 2/4. In terms of biological role, catalyzes the reversible isomerization of glucose-6-phosphate to fructose-6-phosphate. This Streptomyces coelicolor (strain ATCC BAA-471 / A3(2) / M145) protein is Glucose-6-phosphate isomerase 2.